We begin with the raw amino-acid sequence, 1438 residues long: DNA polymerase III PolC-type (1438 aa).

An Exonuclease domain is found at 422–578; the sequence is YVVFDVETTG…YDTEATAYIF (157 aa).

It belongs to the DNA polymerase type-C family. PolC subfamily.

Its subcellular location is the cytoplasm. It catalyses the reaction DNA(n) + a 2'-deoxyribonucleoside 5'-triphosphate = DNA(n+1) + diphosphate. Required for replicative DNA synthesis. This DNA polymerase also exhibits 3' to 5' exonuclease activity. This is DNA polymerase III PolC-type from Staphylococcus epidermidis (strain ATCC 35984 / DSM 28319 / BCRC 17069 / CCUG 31568 / BM 3577 / RP62A).